The sequence spans 386 residues: Glycerate dehydrogenase HPR, peroxisomal (386 aa).

NAD(+)-binding positions include 175–176 (RI), 271–273 (CSR), and aspartate 297. Arginine 273 is a catalytic residue. Glutamate 302 is a catalytic residue. Histidine 320 acts as the Proton donor in catalysis. 320–323 (HIAS) serves as a coordination point for NAD(+). A Microbody targeting signal motif is present at residues 384–386 (SKL).

The protein belongs to the D-isomer specific 2-hydroxyacid dehydrogenase family. Present in leaves (at protein level). Mostly expressed in photosynthetic tissues such as leaves, stems, flowers, buds, and, to a lower extent, in siliques and roots.

It localises to the peroxisome. The enzyme catalyses (R)-glycerate + NAD(+) = 3-hydroxypyruvate + NADH + H(+). It participates in photosynthesis; photorespiration; 3-phospho-D-glycerate from glycine: step 3/4. Slightly inhibited by oxalate. Its function is as follows. Catalyzes the NADH-dependent reduction of hydroxypyruvate into glycerate in the photorespiratory core cycle. Mediates fatty acid beta-oxidation in germinating seeds when malate dehydrogenase is absent. The polypeptide is Glycerate dehydrogenase HPR, peroxisomal (HPR) (Arabidopsis thaliana (Mouse-ear cress)).